The following is a 217-amino-acid chain: uncharacterized protein (217 aa).

This is an uncharacterized protein from Methanothermobacter thermautotrophicus (Methanobacterium thermoformicicum).